Consider the following 645-residue polypeptide: ATP-dependent zinc metalloprotease FtsH 3 (645 aa).

The Cytoplasmic segment spans residues 1-11 (MQNKRNQSRVL). A helical membrane pass occupies residues 12-32 (WLLLIYITIGIFIYVGVNSLI). Topologically, residues 33–110 (GTPDVSKIEY…YVRSLENSWW (78 aa)) are periplasmic. A helical transmembrane segment spans residues 111-131 (ISILTFLLPVFLLIFLFTFLF). Residues 132-645 (RSSGGGANQG…ENNLIERKGI (514 aa)) lie on the Cytoplasmic side of the membrane. ATP is bound at residue 202–209 (GEPGTGKT). Histidine 424 contacts Zn(2+). Glutamate 425 is an active-site residue. 2 residues coordinate Zn(2+): histidine 428 and aspartate 501.

This sequence in the central section; belongs to the AAA ATPase family. In the C-terminal section; belongs to the peptidase M41 family. Homohexamer. It depends on Zn(2+) as a cofactor.

The protein resides in the cell inner membrane. In terms of biological role, acts as a processive, ATP-dependent zinc metallopeptidase for both cytoplasmic and membrane proteins. Plays a role in the quality control of integral membrane proteins. This Petrotoga mobilis (strain DSM 10674 / SJ95) protein is ATP-dependent zinc metalloprotease FtsH 3.